Reading from the N-terminus, the 150-residue chain is Endoribonuclease YbeY (150 aa).

Positions 116, 120, and 126 each coordinate Zn(2+).

Belongs to the endoribonuclease YbeY family. Zn(2+) is required as a cofactor.

The protein resides in the cytoplasm. In terms of biological role, single strand-specific metallo-endoribonuclease involved in late-stage 70S ribosome quality control and in maturation of the 3' terminus of the 16S rRNA. This Beutenbergia cavernae (strain ATCC BAA-8 / DSM 12333 / CCUG 43141 / JCM 11478 / NBRC 16432 / NCIMB 13614 / HKI 0122) protein is Endoribonuclease YbeY.